Reading from the N-terminus, the 228-residue chain is MVTNLLTLALPKGKLGQDALQLLQAAGLPVEGVATEARQLTFTFPAPGIRYLICRPTDVPTYVEYGAADLGIVGKDTLAEAGADVFELVDLGFGYCRFVVAAPRERWEEAGRSLENLLAGSRRVATKFPRVAASFFQERGLPVEIIKLHGNIELAPRAGLADLIVDIVSTGRTLKENDLVEVAPIFSSTARLIANRVSYRINYRRLTSVVEALKRAAGQGGEKIATTN.

Belongs to the ATP phosphoribosyltransferase family. Short subfamily. In terms of assembly, heteromultimer composed of HisG and HisZ subunits.

The protein localises to the cytoplasm. The catalysed reaction is 1-(5-phospho-beta-D-ribosyl)-ATP + diphosphate = 5-phospho-alpha-D-ribose 1-diphosphate + ATP. The protein operates within amino-acid biosynthesis; L-histidine biosynthesis; L-histidine from 5-phospho-alpha-D-ribose 1-diphosphate: step 1/9. Its function is as follows. Catalyzes the condensation of ATP and 5-phosphoribose 1-diphosphate to form N'-(5'-phosphoribosyl)-ATP (PR-ATP). Has a crucial role in the pathway because the rate of histidine biosynthesis seems to be controlled primarily by regulation of HisG enzymatic activity. The polypeptide is ATP phosphoribosyltransferase (Moorella thermoacetica (strain ATCC 39073 / JCM 9320)).